The sequence spans 883 residues: Phycobiliprotein ApcE (883 aa).

Residue Cys181 coordinates (2R,3E)-phycocyanobilin. PBS-linker domains follow at residues 238 to 418, 488 to 669, and 684 to 861; these read SLQG…FQKT, SARQ…KNEL, and RSIQ…KQTK.

It belongs to the phycobilisome linker protein family. Contains one covalently linked bilin chromophore. This protein autochromophorylates (Potential).

The protein resides in the plastid. It localises to the cyanelle thylakoid membrane. Its function is as follows. This protein is postulated to act both as terminal energy acceptor and as a linker polypeptide that stabilizes the phycobilisome architecture. May have intrinsic bilin lyase activity. The chain is Phycobiliprotein ApcE (apcE) from Cyanophora paradoxa.